The chain runs to 220 residues: Ribonuclease HII (220 aa).

An RNase H type-2 domain is found at 32-220 (KHIAGIDEAG…FAPIKGRFDC (189 aa)). A divalent metal cation-binding residues include D38, E39, and D130.

This sequence belongs to the RNase HII family. Requires Mn(2+) as cofactor. Mg(2+) serves as cofactor.

The protein resides in the cytoplasm. The enzyme catalyses Endonucleolytic cleavage to 5'-phosphomonoester.. Functionally, endonuclease that specifically degrades the RNA of RNA-DNA hybrids. The protein is Ribonuclease HII of Brucella canis (strain ATCC 23365 / NCTC 10854 / RM-666).